A 375-amino-acid chain; its full sequence is Alcohol dehydrogenase 1B (375 aa).

S1 bears the N-acetylserine mark. C46, H67, C97, C100, C103, C111, and C174 together coordinate Zn(2+). Residues 199-204 (GLGGVG), D223, K228, 293-295 (VGV), and R370 contribute to the NAD(+) site.

It belongs to the zinc-containing alcohol dehydrogenase family. Class-I subfamily. In terms of assembly, multimeric (with different ratios of monomers). Zn(2+) serves as cofactor.

Its subcellular location is the cytoplasm. It catalyses the reaction a primary alcohol + NAD(+) = an aldehyde + NADH + H(+). The catalysed reaction is a secondary alcohol + NAD(+) = a ketone + NADH + H(+). The chain is Alcohol dehydrogenase 1B from Saara hardwickii (Indian spiny-tailed lizard).